The following is a 172-amino-acid chain: Crossover junction endodeoxyribonuclease RuvC (172 aa).

Residues D7, E67, and D140 contribute to the active site. D7, E67, and D140 together coordinate Mg(2+).

The protein belongs to the RuvC family. As to quaternary structure, homodimer which binds Holliday junction (HJ) DNA. The HJ becomes 2-fold symmetrical on binding to RuvC with unstacked arms; it has a different conformation from HJ DNA in complex with RuvA. In the full resolvosome a probable DNA-RuvA(4)-RuvB(12)-RuvC(2) complex forms which resolves the HJ. Mg(2+) is required as a cofactor.

The protein localises to the cytoplasm. It catalyses the reaction Endonucleolytic cleavage at a junction such as a reciprocal single-stranded crossover between two homologous DNA duplexes (Holliday junction).. The RuvA-RuvB-RuvC complex processes Holliday junction (HJ) DNA during genetic recombination and DNA repair. Endonuclease that resolves HJ intermediates. Cleaves cruciform DNA by making single-stranded nicks across the HJ at symmetrical positions within the homologous arms, yielding a 5'-phosphate and a 3'-hydroxyl group; requires a central core of homology in the junction. The consensus cleavage sequence is 5'-(A/T)TT(C/G)-3'. Cleavage occurs on the 3'-side of the TT dinucleotide at the point of strand exchange. HJ branch migration catalyzed by RuvA-RuvB allows RuvC to scan DNA until it finds its consensus sequence, where it cleaves and resolves the cruciform DNA. In Syntrophomonas wolfei subsp. wolfei (strain DSM 2245B / Goettingen), this protein is Crossover junction endodeoxyribonuclease RuvC.